A 288-amino-acid polypeptide reads, in one-letter code: Oxaloacetate decarboxylase (288 aa).

Position 47 (Ser47) interacts with substrate. Residue Asp85 coordinates Mg(2+). The substrate site is built by Arg156 and His232.

The protein belongs to the isocitrate lyase/PEP mutase superfamily. Oxaloacetate decarboxylase family. As to quaternary structure, homotetramer; dimer of dimers. It depends on Mg(2+) as a cofactor.

It catalyses the reaction oxaloacetate + H(+) = pyruvate + CO2. In terms of biological role, catalyzes the decarboxylation of oxaloacetate into pyruvate. Seems to play a role in maintaining cellular concentrations of bicarbonate and pyruvate. In Bradyrhizobium sp. (strain BTAi1 / ATCC BAA-1182), this protein is Oxaloacetate decarboxylase.